The sequence spans 670 residues: Zinc finger and BTB domain-containing protein 5 (670 aa).

The 70-residue stretch at Cys-24–Glu-93 folds into the BTB domain. Disordered stretches follow at residues Leu-158–Gly-256 and Glu-268–Asp-382. Residues Pro-170–Gln-181 are compositionally biased toward polar residues. Residue Ser-234 is modified to Phosphoserine. A Glycyl lysine isopeptide (Lys-Gly) (interchain with G-Cter in SUMO2) cross-link involves residue Lys-239. The span at Ser-285–Glu-295 shows a compositional bias: polar residues. Glycyl lysine isopeptide (Lys-Gly) (interchain with G-Cter in SUMO2) cross-links involve residues Lys-317 and Lys-325. The span at Ala-345–Ala-360 shows a compositional bias: low complexity. The segment covering Glu-361–Phe-374 has biased composition (basic and acidic residues). A Phosphoserine modification is found at Ser-366. Glycyl lysine isopeptide (Lys-Gly) (interchain with G-Cter in SUMO2) cross-links involve residues Lys-399 and Lys-410. A compositionally biased stretch (polar residues) spans Ser-414–Asp-432. Disordered stretches follow at residues Ser-414–Cys-433 and Leu-442–Asp-470. A compositionally biased stretch (low complexity) spans Ser-444–Ser-459. Residues Lys-535, Lys-587, and Lys-590 each participate in a glycyl lysine isopeptide (Lys-Gly) (interchain with G-Cter in SUMO2) cross-link. The segment at Tyr-606–His-628 adopts a C2H2-type 1 zinc-finger fold. A C2H2-type 2; atypical zinc finger spans residues Tyr-634–Cys-657. Residues Lys-638 and Lys-651 each participate in a glycyl lysine isopeptide (Lys-Gly) (interchain with G-Cter in SUMO2) cross-link.

It is found in the nucleus. May be involved in transcriptional regulation. The polypeptide is Zinc finger and BTB domain-containing protein 5 (Zbtb5) (Mus musculus (Mouse)).